The primary structure comprises 547 residues: Vacuolar fusion protein MON1 homolog B (547 aa).

Position 1 is an N-acetylmethionine (Met1). The segment at 1 to 106 (MEAGGDTAAP…GGDPSDEEWR (106 aa)) is disordered. Residues 57 to 66 (PPSPSPPPQS) show a composition bias toward pro residues. Phosphoserine occurs at positions 59 and 61.

This sequence belongs to the MON1/SAND family. As to quaternary structure, interacts with CCNT2; down-regulates CCNT2-mediated activation of viral promoters during herpes simplex virus 1/HHV-1 infection. Found in a complex with RMC1, CCZ1 MON1A and MON1B.

This Macaca fascicularis (Crab-eating macaque) protein is Vacuolar fusion protein MON1 homolog B (MON1B).